The primary structure comprises 452 residues: MTTTRFAPSPTGRLHVGNIRTALHNWMLAKKHGGRFLLRIDDTDAERSKEEYVHAIRADLAWLGLEPDGEERQSERLEHYEAAFEALKAAGRVYPAYETAQELELKRKIQLGRGLPPIYDRAALKLSDDERAAKEAQGIAPHWRFKLDHDVPITWEDRVRGPQKFDPAQLSDPVIRRADGSWLYMLPSAVDDIDMGITHVLRGEDHVSNTAVQIQMFTALFAAQHDAQQSPPEFAHEALLVGKEGKLSKRLGSLGCDAFRERGIEPEALVAMLARLGTSQPVEPIADRQVLLDTFDLSTFGRAPAKFDDAELERVNTAIVHAMDFEQVKQRLPEGIDAAGWHAIQPNLATVDEAGEWWRLVTGPIEQPEFSDEDRAYLAEAAETLAWDDDPWGTLTAKLKDSTGRKGKALFLPLRQALTGMNHGPDMGELLPLIGEEEARARLQSAADQRGG.

The 'HIGH' region motif lies at 8 to 18 (PSPTGRLHVGN). The 'KMSKS' region motif lies at 246-250 (KLSKR). K249 contacts ATP.

Belongs to the class-I aminoacyl-tRNA synthetase family. Glutamate--tRNA ligase type 1 subfamily. Monomer.

The protein resides in the cytoplasm. The catalysed reaction is tRNA(Glu) + L-glutamate + ATP = L-glutamyl-tRNA(Glu) + AMP + diphosphate. In terms of biological role, catalyzes the attachment of glutamate to tRNA(Glu) in a two-step reaction: glutamate is first activated by ATP to form Glu-AMP and then transferred to the acceptor end of tRNA(Glu). The chain is Glutamate--tRNA ligase 2 from Erythrobacter litoralis (strain HTCC2594).